Here is a 467-residue protein sequence, read N- to C-terminus: Indoleacetamide hydrolase (467 aa).

Active-site charge relay system residues include Lys-74 and Ser-149. Residue Ser-173 is the Acyl-ester intermediate of the active site.

The protein belongs to the amidase family.

It participates in plant hormone metabolism; auxin biosynthesis. Hydrolyzes indole-3-acetamide (IAM) into indole-3-acetic acid (IAA). The chain is Indoleacetamide hydrolase (tms2) from Rhizobium radiobacter (Agrobacterium tumefaciens).